The sequence spans 2837 residues: Probable polyketide synthase 3 (2837 aa).

A Ketosynthase family 3 (KS3) domain is found at 39–464 (NNGIGIIGIG…GSNVCIILKD (426 aa)). Residues Cys209, His348, and His388 each act as for beta-ketoacyl synthase activity in the active site. The interval 664–697 (GIKPTFIVGHSLGEVTAAYCSGMIDLETECYLIY) is acyl/malonyl transferase. The active-site For acyl/malonyl transferase activity is the Ser674. Positions 962–1084 (IDILGNSITD…GNFQLFKHNG (123 aa)) are N-terminal hotdog fold. A PKS/mFAS DH domain is found at 962–1255 (IDILGNSITD…CTSLTPIQDS (294 aa)). The Proton acceptor; for dehydratase activity role is filled by His995. A C-terminal hotdog fold region spans residues 1106-1255 (NLTKLTKEDL…CTSLTPIQDS (150 aa)). Catalysis depends on Asp1169, which acts as the Proton donor; for dehydratase activity. The Carrier domain occupies 2330–2407 (DNKNSVNQMF…SSIKIITNSL (78 aa)). Ser2367 is subject to O-(pantetheine 4'-phosphoryl)serine. The helical transmembrane segment at 2464-2484 (KVILLSGSTGFLGGYLLLNLV) threads the bilayer.

The cofactor is pantetheine 4'-phosphate.

The protein localises to the membrane. Probable polyketide synthase. This is Probable polyketide synthase 3 (pks3) from Dictyostelium discoideum (Social amoeba).